The sequence spans 750 residues: Photosystem I P700 chlorophyll a apoprotein A1 (750 aa).

8 helical membrane passes run 70–93, 156–179, 195–219, 291–309, 346–369, 385–411, 433–455, and 531–549; these read VFSA…FHGA, LYCT…FHYH, LNHH…HVSL, TAHH…GHMY, WHAQ…HHMY, LSLF…IFMV, AIVS…LYIH, and FLVH…LILL. The [4Fe-4S] cluster site is built by Cys573 and Cys582. The next 2 helical transmembrane spans lie at 589-610 and 664-686; these read HVFL…HFSW and LSAY…MFLF. Chlorophyll a' is bound at residue His675. Positions 683 and 691 each coordinate chlorophyll a. A phylloquinone-binding site is contributed by Trp692. Residues 724–744 form a helical membrane-spanning segment; sequence AVGVAHYLLGGIVTTWAFFLA.

Belongs to the PsaA/PsaB family. As to quaternary structure, the PsaA/B heterodimer binds the P700 chlorophyll special pair and subsequent electron acceptors. PSI consists of a core antenna complex that captures photons, and an electron transfer chain that converts photonic excitation into a charge separation. The eukaryotic PSI reaction center is composed of at least 11 subunits. It depends on P700 is a chlorophyll a/chlorophyll a' dimer, A0 is one or more chlorophyll a, A1 is one or both phylloquinones and FX is a shared 4Fe-4S iron-sulfur center. as a cofactor.

Its subcellular location is the plastid. It is found in the chloroplast thylakoid membrane. The enzyme catalyses reduced [plastocyanin] + hnu + oxidized [2Fe-2S]-[ferredoxin] = oxidized [plastocyanin] + reduced [2Fe-2S]-[ferredoxin]. In terms of biological role, psaA and PsaB bind P700, the primary electron donor of photosystem I (PSI), as well as the electron acceptors A0, A1 and FX. PSI is a plastocyanin-ferredoxin oxidoreductase, converting photonic excitation into a charge separation, which transfers an electron from the donor P700 chlorophyll pair to the spectroscopically characterized acceptors A0, A1, FX, FA and FB in turn. Oxidized P700 is reduced on the lumenal side of the thylakoid membrane by plastocyanin. In Pinus koraiensis (Korean pine), this protein is Photosystem I P700 chlorophyll a apoprotein A1.